The sequence spans 385 residues: Na(+)/H(+) antiporter NhaA (385 aa).

The next 11 membrane-spanning stretches (helical) occupy residues 9 to 29 (YSAIFLLCSAALAIIFANVLD), 45 to 65 (IFGLITPHDIVADFLLAVFFF), 87 to 107 (IIPGVCAAGGILVPISIYLSV), 114 to 134 (GWPVPTATDVAFSLGILAIFG), 155 to 175 (AGIVIIATAFSVSISYWWIIV), 198 to 218 (TFLIIPAMLLCALAAWVSVYQ), 220 to 235 (GIHATIAGVMLGIMLN), 245 to 265 (ALEPYINGIILPAFAFLAAMV), 282 to 302 (ILLGLLFGKLLGISVFGIIAL), 312 to 332 (FFNLLVVSALGGIGFTVSLLM), and 345 to 365 (QGVIAVLIGSLLSAILAIILM).

The protein belongs to the NhaA Na(+)/H(+) (TC 2.A.33) antiporter family.

It localises to the cell membrane. The catalysed reaction is Na(+)(in) + 2 H(+)(out) = Na(+)(out) + 2 H(+)(in). Na(+)/H(+) antiporter that extrudes sodium in exchange for external protons. The sequence is that of Na(+)/H(+) antiporter NhaA from Tropheryma whipplei (strain TW08/27) (Whipple's bacillus).